The sequence spans 1607 residues: Phosphatidylinositol 3-kinase piki-1 (1607 aa).

In terms of domain architecture, UIM spans 2 to 21 (SDDEELQLAIEISKKTFKDE). 3 disordered regions span residues 54–91 (EANS…HSQS), 105–128 (STSQ…KFPP), and 142–182 (PPPP…SFAS). Residues 58–69 (PGPSSYSGSLAT) show a composition bias toward polar residues. Pro residues predominate over residues 158–169 (PPVPIHPTPPVS). The 92-residue stretch at 362 to 453 (ASTVKVVVYK…GDDVKLDLGV (92 aa)) folds into the PI3K-RBD domain. One can recognise a C2 PI3K-type domain in the interval 598-766 (KMDFLQIMLN…KIWDTEIYFP (169 aa)). The 178-residue stretch at 776–953 (PQDFATLDIE…AIRCQNLQQK (178 aa)) folds into the PIK helical domain. Residues 1029-1303 (RIEECSVFNS…MIQNSLGSAF (275 aa)) form the PI3K/PI4K catalytic domain. A G-loop region spans residues 1035–1041 (VFNSNAK). The interval 1168-1176 (GIGDRHNDN) is catalytic loop. An activation loop region spans residues 1187-1213 (HIDFGKYMGDWQMAAGFRRDRVPFVFT). The PX domain occupies 1344–1458 (GRISRVTVLK…TFFHSILRDN (115 aa)). Residues 1472 to 1601 (SQCQIYLKIE…KNCRTLEGWF (130 aa)) enclose the C2 domain.

This sequence belongs to the PI3/PI4-kinase family.

The protein resides in the cell projection. Its subcellular location is the phagocytic cup. It is found in the cytoplasmic vesicle. It localises to the phagosome membrane. The protein localises to the cytoplasm. It catalyses the reaction a 1,2-diacyl-sn-glycero-3-phospho-(1D-myo-inositol) + ATP = a 1,2-diacyl-sn-glycero-3-phospho-(1D-myo-inositol-3-phosphate) + ADP + H(+). In terms of biological role, phosphatidylinositol 3-kinase involved in clearance of apoptotic cell corpses by phagosomes. Phagosome maturation requires two sequential and non-overlapping pulses of phosphatidylinositol-3-phosphate (PI3P) on the vesicle surface which mediates recruitment of sortins snx-1 and lst-4 and small GTPases rab-5, rab-2 and rab-7. The first pulse is initiated by piki-1, then maintained by vps-34 which also produces the second pulse. Unlike vps-34, not involved in the formation of PI3P in early endosomes. This chain is Phosphatidylinositol 3-kinase piki-1, found in Caenorhabditis elegans.